The sequence spans 616 residues: Chaperone protein HscA (616 aa).

Belongs to the heat shock protein 70 family.

Chaperone involved in the maturation of iron-sulfur cluster-containing proteins. Has a low intrinsic ATPase activity which is markedly stimulated by HscB. Involved in the maturation of IscU. The protein is Chaperone protein HscA of Cronobacter sakazakii (strain ATCC BAA-894) (Enterobacter sakazakii).